Consider the following 389-residue polypeptide: 3-ketoacyl-CoA thiolase (389 aa).

Catalysis depends on Cys91, which acts as the Acyl-thioester intermediate. Active-site proton acceptor residues include His343 and Cys373.

The protein belongs to the thiolase-like superfamily. Thiolase family. In terms of assembly, heterotetramer of two alpha chains (FadB) and two beta chains (FadA).

Its subcellular location is the cytoplasm. The catalysed reaction is an acyl-CoA + acetyl-CoA = a 3-oxoacyl-CoA + CoA. The protein operates within lipid metabolism; fatty acid beta-oxidation. In terms of biological role, catalyzes the final step of fatty acid oxidation in which acetyl-CoA is released and the CoA ester of a fatty acid two carbons shorter is formed. In Pseudoalteromonas translucida (strain TAC 125), this protein is 3-ketoacyl-CoA thiolase.